The following is a 331-amino-acid chain: MSDNKKQQALELALKQIEKQFGKGSIMKLGDGADHSIEAIPSGSIALDIALGIGGYPRGRIIEVYGPESSGKTTLTLHAMASAQKQGGTVAFIDAEHALDPNYAKALGVDIDNLVLSQPDTGEQALDIAEALIKSGSIDMIVIDSVAALVPEAEIAGDMSANHVGLQARMMSQAMRKMSGVISKSNVVAIFINQIREKVGVMFGNPETTPGGRALKFFSSVRLEIRRAEAIKQGSEMIGIKSNVKVVKSKVAPPLKTASIDIMYGTGISRSGEVLDLSVELNLVNKSGAWYNIGEEKLGQGRDNAKQYLEDKPELLNELEKKVRTHFKLTK.

66–73 serves as a coordination point for ATP; that stretch reads GPESSGKT.

Belongs to the RecA family.

It localises to the cytoplasm. In terms of biological role, can catalyze the hydrolysis of ATP in the presence of single-stranded DNA, the ATP-dependent uptake of single-stranded DNA by duplex DNA, and the ATP-dependent hybridization of homologous single-stranded DNAs. It interacts with LexA causing its activation and leading to its autocatalytic cleavage. The sequence is that of Protein RecA from Acholeplasma laidlawii (strain PG-8A).